The sequence spans 328 residues: Thiamine-monophosphate kinase (328 aa).

The Mg(2+) site is built by aspartate 30, threonine 45, threonine 46, and aspartate 47. Histidine 54 is a binding site for substrate. Mg(2+) contacts are provided by aspartate 75 and aspartate 122. ATP-binding positions include 121–122 (GD) and arginine 146. Aspartate 211 contacts Mg(2+). An ATP-binding site is contributed by serine 213. Aspartate 214 contributes to the Mg(2+) binding site. Glutamate 262 and phenylalanine 321 together coordinate substrate.

It belongs to the thiamine-monophosphate kinase family.

The catalysed reaction is thiamine phosphate + ATP = thiamine diphosphate + ADP. It functions in the pathway cofactor biosynthesis; thiamine diphosphate biosynthesis; thiamine diphosphate from thiamine phosphate: step 1/1. Functionally, catalyzes the ATP-dependent phosphorylation of thiamine-monophosphate (TMP) to form thiamine-pyrophosphate (TPP), the active form of vitamin B1. The polypeptide is Thiamine-monophosphate kinase (Haemophilus influenzae (strain ATCC 51907 / DSM 11121 / KW20 / Rd)).